The chain runs to 97 residues: UPF0147 protein MA_0092 (97 aa).

Belongs to the UPF0147 family.

The sequence is that of UPF0147 protein MA_0092 from Methanosarcina acetivorans (strain ATCC 35395 / DSM 2834 / JCM 12185 / C2A).